The primary structure comprises 191 residues: Cell division protein SepF (191 aa).

Positions 153–178 (FPEEVSPSNISSKKTSPYSLETNTTP) are enriched in polar residues. Residues 153–191 (FPEEVSPSNISSKKTSPYSLETNTTPEPAWGESKLSAFS) are disordered.

The protein belongs to the SepF family. Homodimer. Interacts with FtsZ.

It is found in the cytoplasm. Functionally, cell division protein that is part of the divisome complex and is recruited early to the Z-ring. Probably stimulates Z-ring formation, perhaps through the cross-linking of FtsZ protofilaments. Its function overlaps with FtsA. This Prochlorococcus marinus (strain MIT 9515) protein is Cell division protein SepF.